The primary structure comprises 110 residues: Large ribosomal subunit protein uL22 (110 aa).

It belongs to the universal ribosomal protein uL22 family. Part of the 50S ribosomal subunit.

In terms of biological role, this protein binds specifically to 23S rRNA; its binding is stimulated by other ribosomal proteins, e.g. L4, L17, and L20. It is important during the early stages of 50S assembly. It makes multiple contacts with different domains of the 23S rRNA in the assembled 50S subunit and ribosome. The globular domain of the protein is located near the polypeptide exit tunnel on the outside of the subunit, while an extended beta-hairpin is found that lines the wall of the exit tunnel in the center of the 70S ribosome. This chain is Large ribosomal subunit protein uL22, found in Actinobacillus pleuropneumoniae serotype 5b (strain L20).